The primary structure comprises 323 residues: Peroxisomal and mitochondrial division factor 2 (323 aa).

3 disordered regions span residues 1–55 (MAEE…NDAI), 73–92 (ESKA…KSDE), and 120–143 (TART…SQKG). The Cytoplasmic portion of the chain corresponds to 1–297 (MAEERSLNGE…WSPNVTAVGS (297 aa)). Positions 13–26 (GQDDESFFDSDQQG) are enriched in acidic residues. Residues 28 to 278 (DGKSTELNQK…INGLKNVVEE (251 aa)) adopt a coiled-coil conformation. Residues 298-318 (GGAVAAVAVAVAGAAVVCYIY) form a helical membrane-spanning segment. Residues 319 to 323 (HSRRV) are Mitochondrial intermembrane-facing.

Homodimer. Interacts with PMD1.

It localises to the mitochondrion outer membrane. Its function is as follows. Involved in morphogenesis and proliferation of mitochondria. Does not act redundantly with PMD1. Is not involved in peroxisomal proliferation. This Arabidopsis thaliana (Mouse-ear cress) protein is Peroxisomal and mitochondrial division factor 2.